Consider the following 270-residue polypeptide: Regulatory protein RecX (270 aa).

The protein belongs to the RecX family.

It localises to the cytoplasm. Functionally, modulates RecA activity. The polypeptide is Regulatory protein RecX (Bacillus cytotoxicus (strain DSM 22905 / CIP 110041 / 391-98 / NVH 391-98)).